A 423-amino-acid polypeptide reads, in one-letter code: Protein IQ-DOMAIN 16 (423 aa).

IQ domains are found at residues 99–127 and 128–150; these read RHWAAIIIQTAFRGYLSRRALRALKGIVK and LQALVRGNNVRNQAKLTLRCIKA. Residues 231 to 251 adopt a coiled-coil conformation; the sequence is QKKLEIAIKREKAQALALSNQ. The calmodulin-binding stretch occupies residues 235 to 252; sequence EIAIKREKAQALALSNQI.

This sequence belongs to the IQD family. As to quaternary structure, binds to multiple calmodulin (CaM) in the presence of Ca(2+) and CaM-like proteins.

It localises to the cytoplasm. The protein localises to the cytoskeleton. The protein resides in the cell membrane. In terms of biological role, may be involved in cooperative interactions with calmodulins or calmodulin-like proteins. Recruits calmodulin proteins to microtubules, thus being a potential scaffold in cellular signaling and trafficking. Regulates cell shape and elongation in aerial organs (i.e. cotyledons, leaves, and hypocotyls) probably by regulating cortical microtubules (MT) arrays orientation. May associate with nucleic acids and regulate gene expression at the transcriptional or post-transcriptional level. The protein is Protein IQ-DOMAIN 16 of Arabidopsis thaliana (Mouse-ear cress).